Consider the following 227-residue polypeptide: Deoxyribose-phosphate aldolase (227 aa).

Catalysis depends on aspartate 84, which acts as the Proton donor/acceptor. Lysine 146 serves as the catalytic Schiff-base intermediate with acetaldehyde. The active-site Proton donor/acceptor is lysine 188.

The protein belongs to the DeoC/FbaB aldolase family. DeoC type 1 subfamily.

It is found in the cytoplasm. The enzyme catalyses 2-deoxy-D-ribose 5-phosphate = D-glyceraldehyde 3-phosphate + acetaldehyde. It participates in carbohydrate degradation; 2-deoxy-D-ribose 1-phosphate degradation; D-glyceraldehyde 3-phosphate and acetaldehyde from 2-deoxy-alpha-D-ribose 1-phosphate: step 2/2. Catalyzes a reversible aldol reaction between acetaldehyde and D-glyceraldehyde 3-phosphate to generate 2-deoxy-D-ribose 5-phosphate. In Pyrobaculum islandicum (strain DSM 4184 / JCM 9189 / GEO3), this protein is Deoxyribose-phosphate aldolase.